Reading from the N-terminus, the 841-residue chain is Translation initiation factor IF-2 (841 aa).

5 stretches are compositionally biased toward basic and acidic residues: residues 1–12 (MSDNEIKNEAPK), 50–92 (EAAL…EATK), 114–170 (EQPK…REEA), 188–202 (READRDNDRRSEANR), and 213–235 (KKGDREDKNERNADRRNQKDVKG). Disordered regions lie at residues 1–24 (MSDNEIKNEAPKKLSLQRRTKTTV) and 50–246 (EAAL…GSAL). Residues 340–510 (TRAPVVTIMG…LLQSEVLELT (171 aa)) form the tr-type G domain. Positions 349 to 356 (GHVDHGKT) are G1. Residue 349-356 (GHVDHGKT) participates in GTP binding. Positions 374-378 (GITQH) are G2. Positions 396 to 399 (DTPG) are G3. GTP-binding positions include 396–400 (DTPGH) and 450–453 (NKID). The tract at residues 450-453 (NKID) is G4. The interval 486–488 (SAK) is G5.

The protein belongs to the TRAFAC class translation factor GTPase superfamily. Classic translation factor GTPase family. IF-2 subfamily.

It is found in the cytoplasm. Functionally, one of the essential components for the initiation of protein synthesis. Protects formylmethionyl-tRNA from spontaneous hydrolysis and promotes its binding to the 30S ribosomal subunits. Also involved in the hydrolysis of GTP during the formation of the 70S ribosomal complex. This Actinobacillus pleuropneumoniae serotype 3 (strain JL03) protein is Translation initiation factor IF-2.